The following is an 882-amino-acid chain: Pyruvate dehydrogenase E1 component (882 aa).

Homodimer. Part of the PDH complex, consisting of multiple copies of pyruvate dehydrogenase (E1), dihydrolipoamide acetyltransferase (E2) and lipoamide dehydrogenase (E3). Thiamine diphosphate is required as a cofactor.

The enzyme catalyses N(6)-[(R)-lipoyl]-L-lysyl-[protein] + pyruvate + H(+) = N(6)-[(R)-S(8)-acetyldihydrolipoyl]-L-lysyl-[protein] + CO2. Functionally, component of the pyruvate dehydrogenase (PDH) complex, that catalyzes the overall conversion of pyruvate to acetyl-CoA and CO(2). This chain is Pyruvate dehydrogenase E1 component (aceE), found in Pseudomonas aeruginosa (strain ATCC 15692 / DSM 22644 / CIP 104116 / JCM 14847 / LMG 12228 / 1C / PRS 101 / PAO1).